Consider the following 524-residue polypeptide: GMP synthase [glutamine-hydrolyzing] (524 aa).

Residues 9–207 (RILILDFGSQ…VIHICQCIPN (199 aa)) form the Glutamine amidotransferase type-1 domain. The Nucleophile role is filled by Cys86. Residues His181 and Glu183 contribute to the active site. Residues 208–399 (WTTKHIIEDS…LGLPADLIYR (192 aa)) form the GMPS ATP-PPase domain. 235–241 (SGGVDSA) contributes to the ATP binding site.

Homodimer.

It carries out the reaction XMP + L-glutamine + ATP + H2O = GMP + L-glutamate + AMP + diphosphate + 2 H(+). The protein operates within purine metabolism; GMP biosynthesis; GMP from XMP (L-Gln route): step 1/1. Functionally, catalyzes the synthesis of GMP from XMP. This is GMP synthase [glutamine-hydrolyzing] from Coxiella burnetii (strain CbuG_Q212) (Coxiella burnetii (strain Q212)).